The chain runs to 190 residues: Guanylate kinase (190 aa).

The Guanylate kinase-like domain maps to 3-185; that stretch reads NYIFIISAPS…SLEQLCKYFE (183 aa). 10 to 17 serves as a coordination point for ATP; sequence APSGAGKS.

It belongs to the guanylate kinase family.

The protein resides in the cytoplasm. The catalysed reaction is GMP + ATP = GDP + ADP. Its function is as follows. Essential for recycling GMP and indirectly, cGMP. This chain is Guanylate kinase, found in Francisella tularensis subsp. holarctica (strain LVS).